The sequence spans 282 residues: MEMO1 family protein Cmaq_1590 (282 aa).

Belongs to the MEMO1 family.

The sequence is that of MEMO1 family protein Cmaq_1590 from Caldivirga maquilingensis (strain ATCC 700844 / DSM 13496 / JCM 10307 / IC-167).